A 233-amino-acid polypeptide reads, in one-letter code: uncharacterized protein (233 aa).

This sequence belongs to the asfivirus H233R family.

This is an uncharacterized protein from African swine fever virus (isolate Tick/Malawi/Lil 20-1/1983) (ASFV).